A 793-amino-acid polypeptide reads, in one-letter code: Serine/threonine-protein kinase MARK1 (793 aa).

The interval 1 to 40 is disordered; it reads MSARTPLPTVNERDTENHTSVDGYTETHIPPTKSSSRQNI. Threonine 5 bears the Phosphothreonine mark. The region spanning 60-311 is the Protein kinase domain; the sequence is YRLQKTIGKG…LEQIMKDRWM (252 aa). ATP-binding positions include 66–74 and lysine 89; that span reads IGKGNFAKV. Catalysis depends on aspartate 182, which acts as the Proton acceptor. Phosphothreonine is present on threonine 208. At threonine 215 the chain carries Phosphothreonine; by LKB1 and TAOK1. Residue serine 219 is modified to Phosphoserine; by GSK3-beta. In terms of domain architecture, UBA spans 329-370; sequence DLNDAKRIDIMVTMGFARDEINDALVSQKYDEVMATYILLGR. Disordered stretches follow at residues 377 to 499 and 517 to 697; these read GGES…GGSM and LQNG…KPRS. A compositionally biased stretch (polar residues) spans 380-403; it reads SLSSGNLCQRSRPSSDLNNSTLQS. Phosphoserine occurs at positions 382, 390, 393, 403, 423, and 444. The segment covering 447 to 459 has biased composition (basic and acidic residues); the sequence is SEQKEEWDKDTAR. The segment covering 462–473 has biased composition (polar residues); that stretch reads GSTTVGSKSEVT. Serine 475 is modified (phosphoserine). Residues 487–499 are compositionally biased toward polar residues; sequence AGPSNNVYSGGSM. Composition is skewed to low complexity over residues 523-547 and 585-599; these read SSLT…GPSA and PAAS…ASTP. Serine 588 carries the post-translational modification Phosphoserine. The residue at position 613 (threonine 613) is a Phosphothreonine; by PKC/PRKCZ. Positions 647-657 are enriched in polar residues; it reads GTSTGIISKIT. Composition is skewed to basic and acidic residues over residues 661–676 and 683–695; these read VRRD…RTDT and EPKD…EAKP. At serine 666 the chain carries Phosphoserine. The KA1 domain occupies 744 to 793; that stretch reads DARQDSLVQWEMEVCKLPRLSLNGVRFKRISGTSIAFKNIASKIANELKL.

Belongs to the protein kinase superfamily. CAMK Ser/Thr protein kinase family. SNF1 subfamily. In terms of assembly, interacts with MAPT/TAU. It depends on Mg(2+) as a cofactor. In terms of processing, phosphorylation at Thr-613 by PRKCZ/aPKC in polarized epithelial cells inhibits the kinase activity. Phosphorylated at Thr-215 by STK11/LKB1 in complex with STE20-related adapter-alpha (STRADA) pseudo kinase and CAB39. Phosphorylation at Thr-215 by TAOK1 activates the kinase activity, leading to phosphorylation and detachment of MAPT/TAU from microtubules. Phosphorylation at Ser-219 by GSK3-beta (GSK3B) inhibits the kinase activity. In terms of tissue distribution, highly expressed in brain and spleen and at lower levels in kidney and skeletal muscle.

It is found in the cell membrane. It localises to the cytoplasm. The protein resides in the cytoskeleton. Its subcellular location is the cell projection. The protein localises to the dendrite. It carries out the reaction L-seryl-[protein] + ATP = O-phospho-L-seryl-[protein] + ADP + H(+). The catalysed reaction is L-threonyl-[protein] + ATP = O-phospho-L-threonyl-[protein] + ADP + H(+). It catalyses the reaction L-seryl-[tau protein] + ATP = O-phospho-L-seryl-[tau protein] + ADP + H(+). The enzyme catalyses L-threonyl-[tau protein] + ATP = O-phospho-L-threonyl-[tau protein] + ADP + H(+). With respect to regulation, activated by phosphorylation on Thr-215. Inhibited by phosphorylation at Ser-219. Its function is as follows. Serine/threonine-protein kinase. Involved in cell polarity and microtubule dynamics regulation. Phosphorylates DCX, MAP2 and MAP4. Phosphorylates the microtubule-associated protein MAPT/TAU. Involved in cell polarity by phosphorylating the microtubule-associated proteins MAP2, MAP4 and MAPT/TAU at KXGS motifs, causing detachment from microtubules, and their disassembly. Involved in the regulation of neuronal migration through its dual activities in regulating cellular polarity and microtubule dynamics, possibly by phosphorylating and regulating DCX. Also acts as a positive regulator of the Wnt signaling pathway, probably by mediating phosphorylation of dishevelled proteins (DVL1, DVL2 and/or DVL3). The protein is Serine/threonine-protein kinase MARK1 of Rattus norvegicus (Rat).